The following is a 335-amino-acid chain: Holliday junction branch migration complex subunit RuvB (335 aa).

The segment at 1–183 (MDERIISSET…FGVIDHLEFY (183 aa)) is large ATPase domain (RuvB-L). Residues Leu22, Arg23, Gly64, Lys67, Thr68, Thr69, 130–132 (EDY), Arg173, Tyr183, and Arg220 contribute to the ATP site. Residue Thr68 coordinates Mg(2+). The interval 184–254 (TEEQLTEIVL…LAKEALTLLQ (71 aa)) is small ATPAse domain (RuvB-S). The head domain (RuvB-H) stretch occupies residues 257–335 (PRGLDTIDQK…HLGISYEKEV (79 aa)). DNA is bound by residues Arg293, Arg312, and Arg317.

It belongs to the RuvB family. Homohexamer. Forms an RuvA(8)-RuvB(12)-Holliday junction (HJ) complex. HJ DNA is sandwiched between 2 RuvA tetramers; dsDNA enters through RuvA and exits via RuvB. An RuvB hexamer assembles on each DNA strand where it exits the tetramer. Each RuvB hexamer is contacted by two RuvA subunits (via domain III) on 2 adjacent RuvB subunits; this complex drives branch migration. In the full resolvosome a probable DNA-RuvA(4)-RuvB(12)-RuvC(2) complex forms which resolves the HJ.

The protein resides in the cytoplasm. The enzyme catalyses ATP + H2O = ADP + phosphate + H(+). The RuvA-RuvB-RuvC complex processes Holliday junction (HJ) DNA during genetic recombination and DNA repair, while the RuvA-RuvB complex plays an important role in the rescue of blocked DNA replication forks via replication fork reversal (RFR). RuvA specifically binds to HJ cruciform DNA, conferring on it an open structure. The RuvB hexamer acts as an ATP-dependent pump, pulling dsDNA into and through the RuvAB complex. RuvB forms 2 homohexamers on either side of HJ DNA bound by 1 or 2 RuvA tetramers; 4 subunits per hexamer contact DNA at a time. Coordinated motions by a converter formed by DNA-disengaged RuvB subunits stimulates ATP hydrolysis and nucleotide exchange. Immobilization of the converter enables RuvB to convert the ATP-contained energy into a lever motion, pulling 2 nucleotides of DNA out of the RuvA tetramer per ATP hydrolyzed, thus driving DNA branch migration. The RuvB motors rotate together with the DNA substrate, which together with the progressing nucleotide cycle form the mechanistic basis for DNA recombination by continuous HJ branch migration. Branch migration allows RuvC to scan DNA until it finds its consensus sequence, where it cleaves and resolves cruciform DNA. This is Holliday junction branch migration complex subunit RuvB from Listeria welshimeri serovar 6b (strain ATCC 35897 / DSM 20650 / CCUG 15529 / CIP 8149 / NCTC 11857 / SLCC 5334 / V8).